Reading from the N-terminus, the 370-residue chain is Histidinol-phosphate aminotransferase 1 (370 aa).

Lysine 222 carries the N6-(pyridoxal phosphate)lysine modification.

Belongs to the class-II pyridoxal-phosphate-dependent aminotransferase family. Histidinol-phosphate aminotransferase subfamily. In terms of assembly, homodimer. Pyridoxal 5'-phosphate is required as a cofactor.

The catalysed reaction is L-histidinol phosphate + 2-oxoglutarate = 3-(imidazol-4-yl)-2-oxopropyl phosphate + L-glutamate. The protein operates within amino-acid biosynthesis; L-histidine biosynthesis; L-histidine from 5-phospho-alpha-D-ribose 1-diphosphate: step 7/9. In Bacillus cereus (strain ZK / E33L), this protein is Histidinol-phosphate aminotransferase 1.